The sequence spans 87 residues: Cell division protein FtsL (87 aa).

Topologically, residues 1–6 (MNKSNF) are cytoplasmic. The chain crosses the membrane as a helical span at residues 7-23 (FLLLAVCVSAFSVVMQQ). At 24 to 87 (NQYRLNFTAL…GNTFMVEHQR (64 aa)) the chain is on the periplasmic side. Residues 31–71 (TALDKAKKQEIALEQDYAQMRLQQARLANHEAIRAAAEKQN) adopt a coiled-coil conformation. Positions 68 to 87 (EKQNLHPPVSGNTFMVEHQR) are disordered.

This sequence belongs to the FtsL family. As to quaternary structure, part of a complex composed of FtsB, FtsL and FtsQ.

It is found in the cell inner membrane. Its function is as follows. Essential cell division protein. May link together the upstream cell division proteins, which are predominantly cytoplasmic, with the downstream cell division proteins, which are predominantly periplasmic. The sequence is that of Cell division protein FtsL from Neisseria gonorrhoeae (strain ATCC 700825 / FA 1090).